Reading from the N-terminus, the 1158-residue chain is Rho1 guanine nucleotide exchange factor 2 (1158 aa).

The disordered stretch occupies residues 42 to 141 (RSSGSITHSP…SFSVSDVSNG (100 aa)). Polar residues predominate over residues 45–63 (GSITHSPTALSSTTSLNEN). The span at 68-81 (FRPASSLSFSPSSL) shows a compositional bias: low complexity. Positions 97–108 (KNNFYRRSSSTD) are enriched in polar residues. The segment covering 132-141 (SFSVSDVSNG) has biased composition (low complexity). The region spanning 447-634 (KRQEIIFEVI…REFLTKLNYE (188 aa)) is the DH domain. A PH domain is found at 670–805 (LIFKGVVKLK…QHIEKQQDII (136 aa)). Phosphoserine is present on residues S746 and S747. One can recognise a CNH domain in the interval 825 to 1120 (GNKLLCAVAY…KLLTDGRGLI (296 aa)).

It is found in the cytoplasm. Stimulates the exchange of Rho1 and Rho5 GDP-bound form into GTP-bound form. Controls septum formation, cell wall synthesis and localization of F-actin patches. This Schizosaccharomyces pombe (strain 972 / ATCC 24843) (Fission yeast) protein is Rho1 guanine nucleotide exchange factor 2 (rgf2).